Consider the following 291-residue polypeptide: MASKKEIKDQIISVTNTKKITKAMEMVAVSKMRKTEERMRLGRPYSEIIKKVIHHVLQGSLEYKHSYLEKRNDKRIGIIIVSTDRGLCGSLNTNLFKQVLFKIQNFAKINIPCDLILFGLKSLSVFKLYGSSIISSVTNLGETPDLSKLIGSIKIILEKYQNNQIDRLFIAYNKFHNKLSQYPKISQLLPLYNEKNIFSNKKIKWDYLYEPESKLILDTLFDRYIESQIYQSLLENIASEQAARMVAMKTATDNSGNRIKELQLIYNKVRQANITQELTEIVAGASAVSVD.

It belongs to the ATPase gamma chain family. As to quaternary structure, F-type ATPases have 2 components, CF(1) - the catalytic core - and CF(0) - the membrane proton channel. CF(1) has five subunits: alpha(3), beta(3), gamma(1), delta(1), epsilon(1). CF(0) has three main subunits: a, b and c.

It localises to the cell membrane. Functionally, produces ATP from ADP in the presence of a proton gradient across the membrane. The gamma chain is believed to be important in regulating ATPase activity and the flow of protons through the CF(0) complex. The sequence is that of ATP synthase gamma chain from Buchnera aphidicola subsp. Schizaphis graminum (strain Sg).